Here is a 125-residue protein sequence, read N- to C-terminus: Small ribosomal subunit protein uS12m (125 aa).

Belongs to the universal ribosomal protein uS12 family.

It localises to the mitochondrion. Protein S12 is involved in the translation initiation step. This chain is Small ribosomal subunit protein uS12m (RPS12), found in Brassica napus (Rape).